Consider the following 248-residue polypeptide: HTH-type transcriptional regulator GgaR (248 aa).

Positions 22–90 (TPLYIKFAET…RGYGTQINNI (69 aa)) constitute an HTH gntR-type domain. The H-T-H motif DNA-binding region spans 50–69 (ERDLSQLTGVSRITVRKAMQ).

Senses ADP-glucose (ADPG), which is the substrate for glycogen elongation, as an effector. In the presence of ADPG, GgaR becomes inactive and derepresses the yegTUV operon, leading to glycogen accumulation. In contrast, in the absence of glucose, the concentration of ADPG decreases, GgaR becomes active, and glycogen accumulation is repressed. Its function is as follows. Transcriptional regulator that regulates glycogen accumulation in response to the amount of glucose available to the cell. Acts as a repressor of the yegTUV operon, which may be involved in glycogen accumulation. This chain is HTH-type transcriptional regulator GgaR, found in Escherichia coli O6:H1 (strain CFT073 / ATCC 700928 / UPEC).